Reading from the N-terminus, the 305-residue chain is Putative lipid kinase SAS0691 (305 aa).

A DAGKc domain is found at 3–139; it reads NKYTHGVLFY…YDVIKINNQY (137 aa). ATP is bound by residues S44, 74 to 80, and T101; that span reads GDGTVNE. Mg(2+) contacts are provided by S220, D223, and E225. E281 serves as the catalytic Proton acceptor.

It belongs to the diacylglycerol/lipid kinase family. It depends on Mg(2+) as a cofactor.

Functionally, may catalyze the ATP-dependent phosphorylation of lipids other than diacylglycerol (DAG). The sequence is that of Putative lipid kinase SAS0691 from Staphylococcus aureus (strain MSSA476).